A 179-amino-acid polypeptide reads, in one-letter code: TM2 domain-containing protein Y66D12A.21 (179 aa).

The first 18 residues, 1-18 (MRQLLLTLSLISVSASDA), serve as a signal peptide directing secretion. Topologically, residues 19-82 (TVKCDDLDPN…IFNRTVPSAC (64 aa)) are extracellular. Residue Asn75 is glycosylated (N-linked (GlcNAc...) asparagine). Residues 83 to 105 (HYGAHVSYTTTVLLSIFLGFFGI) form a helical membrane-spanning segment. One can recognise a TM2 domain in the interval 88 to 135 (VSYTTTVLLSIFLGFFGIDRIYLGYYALGLIKMFSLGGLFVFWLVDII). Residues 106-109 (DRIY) are Cytoplasmic-facing. Residues 110–132 (LGYYALGLIKMFSLGGLFVFWLV) form a helical membrane-spanning segment. The Extracellular portion of the chain corresponds to 133–179 (DIILISLQLLGPADGTAYAMAYYGPKAQMIRFDSHTNFSFYTCDGCL). N-linked (GlcNAc...) asparagine glycosylation occurs at Asn169.

This sequence belongs to the TM2 family.

It localises to the membrane. This Caenorhabditis elegans protein is TM2 domain-containing protein Y66D12A.21.